The sequence spans 78 residues: Large ribosomal subunit protein bL28 (78 aa).

Belongs to the bacterial ribosomal protein bL28 family.

This Pseudoalteromonas atlantica (strain T6c / ATCC BAA-1087) protein is Large ribosomal subunit protein bL28.